A 309-amino-acid polypeptide reads, in one-letter code: L-aminoadipate-semialdehyde dehydrogenase-phosphopantetheinyl transferase (309 aa).

CoA-binding positions include Arg47, 86 to 91, and 108 to 111; these read RTAKGK and NISH. Residues Asp129 and Glu181 each contribute to the Mg(2+) site. 181-185 provides a ligand contact to CoA; it reads ESFIK. Position 258 is a phosphoserine (Ser258).

The protein belongs to the P-Pant transferase superfamily. AcpS family. Monomer. Requires Mg(2+) as cofactor. As to expression, detected in heart, skeletal muscle, placenta, testis, brain, pancreas, liver and kidney.

It is found in the cytoplasm. Its subcellular location is the cytosol. The enzyme catalyses apo-[ACP] + CoA = holo-[ACP] + adenosine 3',5'-bisphosphate + H(+). The catalysed reaction is apo-[ACP] + acetyl-CoA = acetyl-[ACP] + adenosine 3',5'-bisphosphate + H(+). Catalyzes the post-translational modification of target proteins by phosphopantetheine. Can transfer the 4'-phosphopantetheine moiety from coenzyme A, regardless of whether the CoA is presented in the free thiol form or as an acetyl thioester, to a serine residue of a broad range of acceptors including the acyl carrier domain of FASN. The protein is L-aminoadipate-semialdehyde dehydrogenase-phosphopantetheinyl transferase (AASDHPPT) of Homo sapiens (Human).